The chain runs to 309 residues: Tagatose-6-phosphate kinase (309 aa).

Belongs to the carbohydrate kinase PfkB family. LacC subfamily.

The catalysed reaction is D-tagatofuranose 6-phosphate + ATP = D-tagatofuranose 1,6-bisphosphate + ADP + H(+). The protein operates within carbohydrate metabolism; D-tagatose 6-phosphate degradation; D-glyceraldehyde 3-phosphate and glycerone phosphate from D-tagatose 6-phosphate: step 1/2. This chain is Tagatose-6-phosphate kinase, found in Streptococcus pyogenes serotype M18 (strain MGAS8232).